Consider the following 290-residue polypeptide: Bifunctional protein FolD 1 (290 aa).

NADP(+) contacts are provided by residues 172–174 and I238; that span reads GAS.

The protein belongs to the tetrahydrofolate dehydrogenase/cyclohydrolase family. In terms of assembly, homodimer.

It carries out the reaction (6R)-5,10-methylene-5,6,7,8-tetrahydrofolate + NADP(+) = (6R)-5,10-methenyltetrahydrofolate + NADPH. The catalysed reaction is (6R)-5,10-methenyltetrahydrofolate + H2O = (6R)-10-formyltetrahydrofolate + H(+). It functions in the pathway one-carbon metabolism; tetrahydrofolate interconversion. Functionally, catalyzes the oxidation of 5,10-methylenetetrahydrofolate to 5,10-methenyltetrahydrofolate and then the hydrolysis of 5,10-methenyltetrahydrofolate to 10-formyltetrahydrofolate. In Pseudomonas putida (strain GB-1), this protein is Bifunctional protein FolD 1.